The sequence spans 159 residues: Style cell-cycle inhibitor 1 (159 aa).

A disordered region spans residues 1–86 (MVSERSSKEK…SDHKLKEGIP (86 aa)). Residues 15-50 (ARSEDSSSSDYEEKVKRHRGTEKDDERRSRRSDKKD) show a composition bias toward basic and acidic residues. Over residues 51–63 (KKSHKHHKSSTSK) the composition is skewed to basic residues. The span at 64–85 (KSKDDKPKKKHTESDHKLKEGI) shows a compositional bias: basic and acidic residues.

Its subcellular location is the nucleus. In terms of biological role, component of the auxin signaling transduction pathway that regulates cell proliferation and differentiation during flowers stigmas and styles development. Involved in the regulation of auxin-related genes. This Arabidopsis thaliana (Mouse-ear cress) protein is Style cell-cycle inhibitor 1.